The following is a 146-amino-acid chain: FAD synthase (146 aa).

Residues 9 to 10 (TF), 14 to 17 (HPGH), and D92 contribute to the ATP site.

This sequence belongs to the archaeal FAD synthase family. As to quaternary structure, homodimer. A divalent metal cation serves as cofactor.

The catalysed reaction is FMN + ATP + H(+) = FAD + diphosphate. The protein operates within cofactor biosynthesis; FAD biosynthesis; FAD from FMN: step 1/1. Catalyzes the transfer of the AMP portion of ATP to flavin mononucleotide (FMN) to produce flavin adenine dinucleotide (FAD) coenzyme. This Halobacterium salinarum (strain ATCC 29341 / DSM 671 / R1) protein is FAD synthase.